Consider the following 96-residue polypeptide: Putative pterin-4-alpha-carbinolamine dehydratase (96 aa).

Belongs to the pterin-4-alpha-carbinolamine dehydratase family.

It carries out the reaction (4aS,6R)-4a-hydroxy-L-erythro-5,6,7,8-tetrahydrobiopterin = (6R)-L-erythro-6,7-dihydrobiopterin + H2O. The sequence is that of Putative pterin-4-alpha-carbinolamine dehydratase from Metallosphaera sedula (strain ATCC 51363 / DSM 5348 / JCM 9185 / NBRC 15509 / TH2).